A 213-amino-acid chain; its full sequence is Probable GTP-binding protein EngB (213 aa).

The 175-residue stretch at 30–204 (EGFEVAFAGR…YTALAGWMEL (175 aa)) folds into the EngB-type G domain. Residues 38–45 (GRSNAGKS), 64–68 (GRTQL), 82–85 (DLPG), 149–152 (TKAD), and 182–185 (LFSA) each bind GTP. Positions 45 and 66 each coordinate Mg(2+).

This sequence belongs to the TRAFAC class TrmE-Era-EngA-EngB-Septin-like GTPase superfamily. EngB GTPase family. The cofactor is Mg(2+).

In terms of biological role, necessary for normal cell division and for the maintenance of normal septation. The sequence is that of Probable GTP-binding protein EngB from Pseudomonas fluorescens (strain SBW25).